Here is a 301-residue protein sequence, read N- to C-terminus: Nucleotide-binding protein ELI_02120 (301 aa).

12 to 19 (GMSGAGKS) contacts ATP. 62–65 (DSRT) provides a ligand contact to GTP.

It belongs to the RapZ-like family.

Its function is as follows. Displays ATPase and GTPase activities. The chain is Nucleotide-binding protein ELI_02120 from Erythrobacter litoralis (strain HTCC2594).